A 299-amino-acid chain; its full sequence is Heat stress transcription factor B-2a (299 aa).

The DNA-binding element occupies 21–115; that stretch reads PTPFLTKTFN…LLREIQRRKI (95 aa). Positions 119–157 are disordered; the sequence is HQTVVAPSSEQRNQTMVVSPSNSGEDNNNNQVMSSSPSS. A hydrophobic repeat HR-A/B region spans residues 166-211; sequence TGNGGLSVELLEENEKLRSQNIQLNRELTQMKSICDNIYSLMSNYV. Residues 261-264 carry the Nuclear localization signal motif; that stretch reads KRTR.

The protein belongs to the HSF family. Class B subfamily. As to quaternary structure, homotrimer. Exhibits temperature-dependent phosphorylation.

It is found in the nucleus. Transcriptional regulator that specifically binds DNA sequence 5'-AGAAnnTTCT-3' known as heat shock promoter elements (HSE). The polypeptide is Heat stress transcription factor B-2a (HSFB2A) (Arabidopsis thaliana (Mouse-ear cress)).